Reading from the N-terminus, the 246-residue chain is Transcription factor A, mitochondrial (246 aa).

Residues 1-42 (MALLRGVWGVLNALGKSGADLCAGCGSRLRYPFSFAYVPKWF) constitute a mitochondrion transit peptide. The segment at residues 50–118 (PKKPMTSYVR…VYKEEINRIQ (69 aa)) is a DNA-binding region (HMG box 1). Phosphoserine; by PKA is present on residues S56 and S61. Phosphothreonine is present on T122. The segment at residues 155-219 (PKRPRSAYNI…RYYNEMKSWE (65 aa)) is a DNA-binding region (HMG box 2). At S160 the chain carries Phosphoserine; by PKA. Phosphoserine occurs at positions 193 and 195.

As to quaternary structure, monomer; binds DNA as a monomer. Homodimer. Component of the mitochondrial transcription initiation complex, composed at least of TFB2M, TFAM and POLRMT. In this complex TFAM recruits POLRMT to the promoter whereas TFB2M induces structural changes in POLRMT to enable promoter opening and trapping of the DNA non-template strand. Upon metabolic stress, forms a complex composed of FOXO3, SIRT3, TFAM and POLRMT. Interacts with TFB1M and TFB2M. Interacts with CLPX; this enhances DNA-binding. In terms of processing, phosphorylation by PKA within the HMG box 1 impairs DNA binding and promotes degradation by the AAA+ Lon protease.

It is found in the mitochondrion. It localises to the mitochondrion matrix. Its subcellular location is the mitochondrion nucleoid. Binds to the mitochondrial light strand promoter and functions in mitochondrial transcription regulation. Component of the mitochondrial transcription initiation complex, composed at least of TFB2M, TFAM and POLRMT that is required for basal transcription of mitochondrial DNA. In this complex, TFAM recruits POLRMT to a specific promoter whereas TFB2M induces structural changes in POLRMT to enable promoter opening and trapping of the DNA non-template strand. Required for accurate and efficient promoter recognition by the mitochondrial RNA polymerase. Promotes transcription initiation from the HSP1 and the light strand promoter by binding immediately upstream of transcriptional start sites. Is able to unwind DNA. Bends the mitochondrial light strand promoter DNA into a U-turn shape via its HMG boxes. Required for maintenance of normal levels of mitochondrial DNA. May play a role in organizing and compacting mitochondrial DNA. The sequence is that of Transcription factor A, mitochondrial from Bos taurus (Bovine).